The primary structure comprises 264 residues: Elongation factor Ts (264 aa).

The tract at residues 76 to 79 (TDFV) is involved in Mg(2+) ion dislocation from EF-Tu.

It belongs to the EF-Ts family.

The protein localises to the cytoplasm. In terms of biological role, associates with the EF-Tu.GDP complex and induces the exchange of GDP to GTP. It remains bound to the aminoacyl-tRNA.EF-Tu.GTP complex up to the GTP hydrolysis stage on the ribosome. The chain is Elongation factor Ts from Deinococcus radiodurans (strain ATCC 13939 / DSM 20539 / JCM 16871 / CCUG 27074 / LMG 4051 / NBRC 15346 / NCIMB 9279 / VKM B-1422 / R1).